The chain runs to 317 residues: Adenine deaminase (317 aa).

Zn(2+)-binding residues include His-14, His-16, and His-194. Catalysis depends on Glu-197, which acts as the Proton donor. Zn(2+) is bound at residue Asp-275. Residue Asp-276 participates in substrate binding.

The protein belongs to the metallo-dependent hydrolases superfamily. Adenosine and AMP deaminases family. Adenine deaminase type 2 subfamily. Zn(2+) is required as a cofactor.

It carries out the reaction adenine + H2O + H(+) = hypoxanthine + NH4(+). In terms of biological role, catalyzes the hydrolytic deamination of adenine to hypoxanthine. Plays an important role in the purine salvage pathway and in nitrogen catabolism. This is Adenine deaminase from Pseudomonas savastanoi pv. phaseolicola (strain 1448A / Race 6) (Pseudomonas syringae pv. phaseolicola (strain 1448A / Race 6)).